The following is a 241-amino-acid chain: uncharacterized protein (241 aa).

In terms of domain architecture, HTH cro/C1-type spans 32 to 86 (LKKWRNLFNIQQIELAKYLNVSPSVISDYEVGRRKNPGVNIIKKYVLALIEIDKE). A DNA-binding region (H-T-H motif) is located at residues 43–62 (QIELAKYLNVSPSVISDYEV).

This is an uncharacterized protein from Methanocaldococcus jannaschii (strain ATCC 43067 / DSM 2661 / JAL-1 / JCM 10045 / NBRC 100440) (Methanococcus jannaschii).